Here is a 271-residue protein sequence, read N- to C-terminus: Tryptophan synthase alpha chain (271 aa).

Residues Glu49 and Asp60 each act as proton acceptor in the active site.

This sequence belongs to the TrpA family. As to quaternary structure, tetramer of two alpha and two beta chains.

The catalysed reaction is (1S,2R)-1-C-(indol-3-yl)glycerol 3-phosphate + L-serine = D-glyceraldehyde 3-phosphate + L-tryptophan + H2O. The protein operates within amino-acid biosynthesis; L-tryptophan biosynthesis; L-tryptophan from chorismate: step 5/5. In terms of biological role, the alpha subunit is responsible for the aldol cleavage of indoleglycerol phosphate to indole and glyceraldehyde 3-phosphate. The sequence is that of Tryptophan synthase alpha chain from Burkholderia ambifaria (strain MC40-6).